A 348-amino-acid polypeptide reads, in one-letter code: Autophagy-related protein 27 (348 aa).

The signal sequence occupies residues 1-20 (MYRPDLLAFLLPLLAAPVFS). Topologically, residues 21–274 (AETLDCGKIR…DDGGDNSSSH (254 aa)) are lumenal. Positions 24–255 (LDCGKIRADG…TWHTKYACEK (232 aa)) constitute an MRH domain. 3 disulfide bridges follow: Cys26–Cys69, Cys82–Cys89, and Cys175–Cys253. Asn61 and Asn84 each carry an N-linked (GlcNAc...) asparagine glycan. A compositionally biased stretch (basic and acidic residues) spans 180–208 (EGTEGEWVSEEKYEKRADEKKDDDKKEDG). Residues 180-219 (EGTEGEWVSEEKYEKRADEKKDDDKKEDGGDKDEGESTLE) are disordered. N-linked (GlcNAc...) asparagine glycosylation is found at Asn226 and Asn270. A helical membrane pass occupies residues 275–295 (WGFFTWFVLIAFLLIAGYLIF). The Cytoplasmic segment spans residues 296-348 (SSWINFTRYGARGWDLLPHSDTIRDIPYLLKDFIRRILNTVQGTGSRGGYSAV).

The protein belongs to the ATG27 family. As to quaternary structure, forms a complex with ATG9 and ATG23.

The protein resides in the cytoplasmic vesicle membrane. It is found in the golgi apparatus membrane. Its subcellular location is the mitochondrion membrane. The protein localises to the preautophagosomal structure membrane. In terms of biological role, effector of VPS34 phosphatidylinositol 3-phosphate kinase signaling. Regulates the cytoplasm to vacuole transport (Cvt) vesicle formation. Plays a role in ATG protein retrieval from the pre-autophagosomal structure (PAS) and is especially required for autophagy-dependent cycling of ATG9. Autophagy is required for proper vegetative growth, asexual/sexual reproduction, and full virulence. Autophagy is particularly involved in the biosynthesis of deoxynivalenol (DON), an important virulence determinant. This Gibberella zeae (strain ATCC MYA-4620 / CBS 123657 / FGSC 9075 / NRRL 31084 / PH-1) (Wheat head blight fungus) protein is Autophagy-related protein 27.